Reading from the N-terminus, the 436-residue chain is Mannan endo-1,4-beta-mannosidase F (436 aa).

The N-terminal stretch at 1–18 (MRSLSSVALLSAIGAASA) is a signal peptide. The CBM1 domain maps to 19–54 (QAGPWGQCAGISHTGPTTCESGWSCVYLNDWYSQCQ). The tract at residues 60 to 88 (SSSTTVSSTKQPSSTVAAPSSTTSAHTLP) is disordered. The ser-rich linker stretch occupies residues 79–113 (SSTTSAHTLPTGSGSFAKTDGLKFNIDGKTKYFAG). The catalytic stretch occupies residues 114–436 (TNAYWLPFLT…CAVIDHISQI (323 aa)). 2 residues coordinate substrate: W146 and N260. Catalysis depends on E261, which acts as the Proton donor. Residue Y336 participates in substrate binding. The active-site Nucleophile is E370. Position 400 (W400) interacts with substrate.

Belongs to the glycosyl hydrolase 5 (cellulase A) family.

It localises to the secreted. It catalyses the reaction Random hydrolysis of (1-&gt;4)-beta-D-mannosidic linkages in mannans, galactomannans and glucomannans.. Functionally, endo-1,4-mannanase, a crucial enzyme for depolymerization of seed galactomannans and wood galactoglucomannans. This chain is Mannan endo-1,4-beta-mannosidase F (manF), found in Aspergillus clavatus (strain ATCC 1007 / CBS 513.65 / DSM 816 / NCTC 3887 / NRRL 1 / QM 1276 / 107).